Consider the following 235-residue polypeptide: tRNA1(Val) (adenine(37)-N6)-methyltransferase (235 aa).

Belongs to the methyltransferase superfamily. tRNA (adenine-N(6)-)-methyltransferase family.

Its subcellular location is the cytoplasm. It carries out the reaction adenosine(37) in tRNA1(Val) + S-adenosyl-L-methionine = N(6)-methyladenosine(37) in tRNA1(Val) + S-adenosyl-L-homocysteine + H(+). In terms of biological role, specifically methylates the adenine in position 37 of tRNA(1)(Val) (anticodon cmo5UAC). The chain is tRNA1(Val) (adenine(37)-N6)-methyltransferase from Flavobacterium johnsoniae (strain ATCC 17061 / DSM 2064 / JCM 8514 / BCRC 14874 / CCUG 350202 / NBRC 14942 / NCIMB 11054 / UW101) (Cytophaga johnsonae).